The primary structure comprises 1012 residues: Beta-alanine-activating enzyme (1012 aa).

ATP is bound by residues 177 to 185 (TTGTTGKPK), Asp-411, Arg-426, and Lys-516.

It belongs to the ATP-dependent AMP-binding enzyme family.

Functionally, covalently binds beta-alanine in an ATP-dependent manner to form a thioester bond with its phosphopantetheine group and transfers it to an, as yet, unknown acceptor. May be required for a post-translational protein modification or for post-transcriptional modification of an RNA. The chain is Beta-alanine-activating enzyme from Drosophila melanogaster (Fruit fly).